The chain runs to 179 residues: Putative ADP-ribosylation factor-like protein 5C (179 aa).

Residue glycine 2 is the site of N-myristoyl glycine attachment. GTP is bound by residues 23-30 (GLDNEGKT), 66-70 (DIVRP), and 125-128 (NKQD).

This sequence belongs to the small GTPase superfamily. Arf family.

Functionally, binds and exchanges GTP and GDP. In Homo sapiens (Human), this protein is Putative ADP-ribosylation factor-like protein 5C (ARL5C).